The chain runs to 563 residues: Tripeptidyl-peptidase 1 (563 aa).

Residues 1-19 (MRLRTCLLGLLALCVASKC) form the signal peptide. Positions 20-195 (SYSPEPDQQR…PEPQVSGTVG (176 aa)) are cleaved as a propeptide — removed in mature form. Cysteines 111 and 122 form a disulfide. In terms of domain architecture, Peptidase S53 spans 199-563 (GVTPSVIRQR…PALLKALIKP (365 aa)). Residues Asn-210 and Asn-222 are each glycosylated (N-linked (GlcNAc...) asparagine). Catalysis depends on charge relay system residues Glu-272 and Asp-276. Asn-286, Asn-313, and Asn-443 each carry an N-linked (GlcNAc...) asparagine glycan. 2 disulfide bridges follow: Cys-365/Cys-526 and Cys-522/Cys-537. Catalysis depends on Ser-475, which acts as the Charge relay system. Residues Asp-517 and Val-518 each contribute to the Ca(2+) site. 3 residues coordinate Ca(2+): Gly-539, Gly-541, and Asp-543.

In terms of assembly, monomer. Interacts with CLN5. Interacts with CLN3. Ca(2+) serves as cofactor. Post-translationally, activated by autocatalytic proteolytical processing upon acidification. N-glycosylation is required for processing and activity.

Its subcellular location is the lysosome. It localises to the melanosome. It catalyses the reaction Release of an N-terminal tripeptide from a polypeptide, but also has endopeptidase activity.. Its function is as follows. Lysosomal serine protease with tripeptidyl-peptidase I activity. May act as a non-specific lysosomal peptidase which generates tripeptides from the breakdown products produced by lysosomal proteinases. Requires substrates with an unsubstituted N-terminus. This chain is Tripeptidyl-peptidase 1 (TPP1), found in Canis lupus familiaris (Dog).